Here is a 37-residue protein sequence, read N- to C-terminus: Large ribosomal subunit protein bL36 (37 aa).

Belongs to the bacterial ribosomal protein bL36 family.

The polypeptide is Large ribosomal subunit protein bL36 (Treponema pallidum (strain Nichols)).